The following is a 187-amino-acid chain: Signal peptidase complex catalytic subunit SEC11 (187 aa).

Over 1-18 (MLSSLSPYMANPRNTLSQ) the chain is Cytoplasmic. A helical; Signal-anchor for type II membrane protein transmembrane segment spans residues 19-39 (VLNFGLVLSSAFMVWKALSVI). The Lumenal portion of the chain corresponds to 40–187 (TNSASPVVVV…MGLMVMLQRE (148 aa)). Active-site charge relay system residues include Ser53 and His92. Asn125 carries N-linked (GlcNAc...) asparagine glycosylation. The Charge relay system role is filled by Asp129. Positions 173-184 (VLLGFMGLMVML) are C-terminal short (CTS) helix.

Belongs to the peptidase S26B family. In terms of assembly, component of the signal peptidase complex (SPC) composed of a catalytic subunit SEC11 and three accessory subunits SPC1, SPC2 and SPC3. The complex induces a local thinning of the ER membrane which is used to measure the length of the signal peptide (SP) h-region of protein substrates. This ensures the selectivity of the complex towards h-regions shorter than 18-20 amino acids. SPC associates with the translocon complex.

The protein resides in the endoplasmic reticulum membrane. It carries out the reaction Cleavage of hydrophobic, N-terminal signal or leader sequences from secreted and periplasmic proteins.. Catalytic component of the signal peptidase complex (SPC) which catalyzes the cleavage of N-terminal signal sequences from nascent proteins as they are translocated into the lumen of the endoplasmic reticulum. Specifically cleaves N-terminal signal peptides that contain a hydrophobic alpha-helix (h-region) shorter than 18-20 amino acids. This chain is Signal peptidase complex catalytic subunit SEC11 (SEC11), found in Ajellomyces capsulatus (strain G186AR / H82 / ATCC MYA-2454 / RMSCC 2432) (Darling's disease fungus).